Here is a 172-residue protein sequence, read N- to C-terminus: MDSTELRKVFKMFDKNGDGRITKKELGESFKNFGIFIPDDELDATMDKIDANGDGCVDVEEFGLLYRSILGDDAAGRAPRTAAAAIGGEGGAPDDEDEGMREAFNVFDQNGDGFITVDELRSVLSSLGLKHGRTADDCRRMISMVDADGDGRVDFKEFKQMMRGGGFAALGG.

4 consecutive EF-hand domains span residues 1-36 (MDST…FGIF), 37-72 (IPDD…ILGD), 95-130 (DEDE…LGLK), and 133-168 (RTAD…GGFA). Ca(2+) contacts are provided by aspartate 14, asparagine 16, aspartate 18, arginine 20, glutamate 25, aspartate 50, asparagine 52, aspartate 54, cysteine 56, glutamate 61, aspartate 108, asparagine 110, aspartate 112, glutamate 119, aspartate 146, aspartate 148, aspartate 150, arginine 152, and glutamate 157.

Potential calcium sensor. This Oryza sativa subsp. japonica (Rice) protein is Probable calcium-binding protein CML28 (CML28).